A 180-amino-acid polypeptide reads, in one-letter code: ATP-dependent protease subunit HslV (180 aa).

T7 is an active-site residue. 3 residues coordinate Na(+): G165, C168, and T171.

It belongs to the peptidase T1B family. HslV subfamily. As to quaternary structure, a double ring-shaped homohexamer of HslV is capped on each side by a ring-shaped HslU homohexamer. The assembly of the HslU/HslV complex is dependent on binding of ATP.

It localises to the cytoplasm. The enzyme catalyses ATP-dependent cleavage of peptide bonds with broad specificity.. Allosterically activated by HslU binding. Its function is as follows. Protease subunit of a proteasome-like degradation complex believed to be a general protein degrading machinery. This Bacillus anthracis (strain A0248) protein is ATP-dependent protease subunit HslV.